A 547-amino-acid chain; its full sequence is T-complex protein 1 subunit gamma (547 aa).

Residue glycine 41 coordinates ADP. ATP is bound at residue glycine 41. Residue aspartate 92 participates in Mg(2+) binding. Residues glycine 93, threonine 94, threonine 95, serine 96, threonine 161, and lysine 162 each contribute to the ADP site. ATP-binding residues include glycine 93, threonine 94, and threonine 95. Cysteine 365 and cysteine 371 form a disulfide bridge. ADP contacts are provided by glycine 410, glycine 481, glutamate 482, glutamate 496, and lysine 501. Residues glycine 410 and glycine 481 each coordinate ATP. Glutamate 496 serves as a coordination point for ATP. Residues 525-534 (HKKKGEDHGR) are compositionally biased toward basic and acidic residues. The interval 525–547 (HKKKGEDHGRQPAAAPEAPQQAE) is disordered. Residues 535–547 (QPAAAPEAPQQAE) show a composition bias toward low complexity.

Belongs to the TCP-1 chaperonin family. Component of the chaperonin-containing T-complex (TRiC), a hexadecamer composed of two identical back-to-back stacked rings enclosing a protein folding chamber. Each ring is made up of eight different subunits: TCP1/CCT1, CCT2, CCT3, CCT4, CCT5, CCT6A/CCT6, CCT7, CCT8.

Its subcellular location is the cytoplasm. The catalysed reaction is ATP + H2O = ADP + phosphate + H(+). Functionally, component of the chaperonin-containing T-complex (TRiC), a molecular chaperone complex that assists the folding of actin, tubulin and other proteins upon ATP hydrolysis. This is T-complex protein 1 subunit gamma (cct3) from Xenopus laevis (African clawed frog).